The primary structure comprises 90 residues: Long neurotoxin OH-34 (90 aa).

Positions 1–20 (KTLLLTLVVVTILCLDLGYT) are cleaved as a signal peptide. Disulfide bonds link C23–C41, C34–C62, C47–C51, C66–C77, and C78–C83.

It belongs to the three-finger toxin family. Long-chain subfamily. Type II alpha-neurotoxin sub-subfamily. Expressed by the venom gland.

It is found in the secreted. Binds with high affinity to muscular (alpha-1/CHRNA1) and neuronal (alpha-7/CHRNA7) nicotinic acetylcholine receptor (nAChR) and inhibits acetylcholine from binding to the receptor, thereby impairing neuromuscular and neuronal transmission. The polypeptide is Long neurotoxin OH-34 (Ophiophagus hannah (King cobra)).